The following is a 219-amino-acid chain: Thiamine-phosphate synthase (219 aa).

Residues 45 to 49 (QYREK) and N77 contribute to the 4-amino-2-methyl-5-(diphosphooxymethyl)pyrimidine site. Mg(2+)-binding residues include D78 and D97. T116 provides a ligand contact to 4-amino-2-methyl-5-(diphosphooxymethyl)pyrimidine. Residue 142–144 (SFT) participates in 2-[(2R,5Z)-2-carboxy-4-methylthiazol-5(2H)-ylidene]ethyl phosphate binding. Position 145 (K145) interacts with 4-amino-2-methyl-5-(diphosphooxymethyl)pyrimidine. Residues G173 and 193-194 (VT) contribute to the 2-[(2R,5Z)-2-carboxy-4-methylthiazol-5(2H)-ylidene]ethyl phosphate site.

It belongs to the thiamine-phosphate synthase family. Mg(2+) is required as a cofactor.

It carries out the reaction 2-[(2R,5Z)-2-carboxy-4-methylthiazol-5(2H)-ylidene]ethyl phosphate + 4-amino-2-methyl-5-(diphosphooxymethyl)pyrimidine + 2 H(+) = thiamine phosphate + CO2 + diphosphate. The enzyme catalyses 2-(2-carboxy-4-methylthiazol-5-yl)ethyl phosphate + 4-amino-2-methyl-5-(diphosphooxymethyl)pyrimidine + 2 H(+) = thiamine phosphate + CO2 + diphosphate. It catalyses the reaction 4-methyl-5-(2-phosphooxyethyl)-thiazole + 4-amino-2-methyl-5-(diphosphooxymethyl)pyrimidine + H(+) = thiamine phosphate + diphosphate. Its pathway is cofactor biosynthesis; thiamine diphosphate biosynthesis; thiamine phosphate from 4-amino-2-methyl-5-diphosphomethylpyrimidine and 4-methyl-5-(2-phosphoethyl)-thiazole: step 1/1. Its function is as follows. Condenses 4-methyl-5-(beta-hydroxyethyl)thiazole monophosphate (THZ-P) and 2-methyl-4-amino-5-hydroxymethyl pyrimidine pyrophosphate (HMP-PP) to form thiamine monophosphate (TMP). The polypeptide is Thiamine-phosphate synthase (Caldicellulosiruptor bescii (strain ATCC BAA-1888 / DSM 6725 / KCTC 15123 / Z-1320) (Anaerocellum thermophilum)).